We begin with the raw amino-acid sequence, 526 residues long: Peptide chain release factor 3 (526 aa).

The region spanning N9–Q277 is the tr-type G domain. GTP is bound by residues S18–T25, D86–H90, and N140–D143.

It belongs to the TRAFAC class translation factor GTPase superfamily. Classic translation factor GTPase family. PrfC subfamily.

It localises to the cytoplasm. Functionally, increases the formation of ribosomal termination complexes and stimulates activities of RF-1 and RF-2. It binds guanine nucleotides and has strong preference for UGA stop codons. It may interact directly with the ribosome. The stimulation of RF-1 and RF-2 is significantly reduced by GTP and GDP, but not by GMP. The protein is Peptide chain release factor 3 of Legionella pneumophila (strain Corby).